A 414-amino-acid polypeptide reads, in one-letter code: Esterase FrsA (414 aa).

It belongs to the FrsA family.

The enzyme catalyses a carboxylic ester + H2O = an alcohol + a carboxylate + H(+). Its function is as follows. Catalyzes the hydrolysis of esters. This Shigella boydii serotype 18 (strain CDC 3083-94 / BS512) protein is Esterase FrsA.